The following is a 414-amino-acid chain: Snake venom metalloproteinase (414 aa).

Residues 1-20 form the signal peptide; that stretch reads MIEVLLVTICLAVFPYQGSS. A propeptide spanning residues 21 to 190 is cleaved from the precursor; the sequence is IILESGNVND…KASDLNFNSD (170 aa). Gln-191 carries the post-translational modification Pyrrolidone carboxylic acid. Positions 197 to 393 constitute a Peptidase M12B domain; sequence RYVELVIVAD…YKPQCILNKP (197 aa). Residues Glu-200 and Asp-284 each contribute to the Ca(2+) site. Disulfide bonds link Cys-308–Cys-388 and Cys-348–Cys-355. His-333 contacts Zn(2+). The active site involves Glu-334. 2 residues coordinate Zn(2+): His-337 and His-343. Residues Cys-388 and Asn-391 each contribute to the Ca(2+) site. A propeptide spanning residues 394 to 414 is cleaved from the precursor; the sequence is LRIDPVSTPVSGNELLEAGEE.

It belongs to the venom metalloproteinase (M12B) family. P-I subfamily. In terms of assembly, monomer. Requires Zn(2+) as cofactor. As to expression, expressed by the venom gland.

The protein resides in the secreted. Snake venom metalloproteinase that impairs hemostasis in the envenomed animal. This Crotalus molossus molossus (Northern black-tailed rattlesnake) protein is Snake venom metalloproteinase.